Consider the following 387-residue polypeptide: Cytochrome b (387 aa).

A run of 4 helical transmembrane segments spans residues 32-52 (FGSL…LLAC), 76-98 (FLLR…LHIG), 113-133 (TWNI…LGYC), and 179-199 (FFSL…MHLI). 2 residues coordinate heme b: H82 and H96. The heme b site is built by H183 and H197. H202 contacts a ubiquinone. The next 4 membrane-spanning stretches (helical) occupy residues 225-245 (FLIK…YMVF), 289-309 (QLGV…PLLD), 321-341 (MGKF…WIGG), and 348-368 (FITI…ILIP).

Belongs to the cytochrome b family. In terms of assembly, fungal cytochrome b-c1 complex contains 10 subunits; 3 respiratory subunits, 2 core proteins and 5 low-molecular weight proteins. Cytochrome b-c1 complex is a homodimer. Heme b serves as cofactor.

It localises to the mitochondrion inner membrane. Its function is as follows. Component of the ubiquinol-cytochrome c reductase complex (complex III or cytochrome b-c1 complex) that is part of the mitochondrial respiratory chain. The b-c1 complex mediates electron transfer from ubiquinol to cytochrome c. Contributes to the generation of a proton gradient across the mitochondrial membrane that is then used for ATP synthesis. The sequence is that of Cytochrome b (cob) from Schizosaccharomyces octosporus (Fission yeast).